A 293-amino-acid chain; its full sequence is Homoserine kinase (293 aa).

Pro-84–Ala-94 contributes to the ATP binding site.

Belongs to the GHMP kinase family. Homoserine kinase subfamily.

It localises to the cytoplasm. It carries out the reaction L-homoserine + ATP = O-phospho-L-homoserine + ADP + H(+). The protein operates within amino-acid biosynthesis; L-threonine biosynthesis; L-threonine from L-aspartate: step 4/5. Its function is as follows. Catalyzes the ATP-dependent phosphorylation of L-homoserine to L-homoserine phosphate. The polypeptide is Homoserine kinase (Wolinella succinogenes (strain ATCC 29543 / DSM 1740 / CCUG 13145 / JCM 31913 / LMG 7466 / NCTC 11488 / FDC 602W) (Vibrio succinogenes)).